Consider the following 952-residue polypeptide: Plasma membrane ATPase 4 (952 aa).

Topologically, residues 1-64 (MAKAISLEEI…EKNESKILKF (64 aa)) are cytoplasmic. Residues 65–84 (LGFMWNPLSWVMEAAAVMAI) form a helical membrane-spanning segment. Topologically, residues 85–96 (ALANGDGKPPDW) are extracellular. The helical transmembrane segment at 97 to 117 (QDFIGIICLLVINSTISFIEE) threads the bilayer. The Cytoplasmic portion of the chain corresponds to 118–246 (NNAGNAAAAL…GHFQKVLTAI (129 aa)). Residues 247 to 267 (GNFCICSIAIGMLVEIIVMYP) traverse the membrane as a helical segment. The Extracellular portion of the chain corresponds to 268-277 (IQHRKYRDGI). Residues 278–299 (DNLLVLLIGGIPIAMPTVLSVT) traverse the membrane as a helical segment. The Cytoplasmic segment spans residues 300-646 (MAIGSHRLSQ…TSRAIFQRMK (347 aa)). The active-site 4-aspartylphosphate intermediate is aspartate 332. Mg(2+) is bound by residues aspartate 591 and aspartate 595. Residues 647 to 668 (NYTIYAVSITIRIVFGFMFIAL) traverse the membrane as a helical segment. Over 669-673 (IWKYD) the chain is Extracellular. Residues 674 to 696 (FSAFMVLIIAILNDGTIMTISKD) form a helical membrane-spanning segment. The Cytoplasmic portion of the chain corresponds to 697-712 (RVKPSPMPDSWKLKEI). Residues 713–733 (FATGVVLGGYQALMTVVFFWA) traverse the membrane as a helical segment. At 734–754 (MHDTDFFSDKFGVKSLRNSDE) the chain is on the extracellular side. Residues 755 to 775 (EMMSALYLQVSIISQALIFVT) form a helical membrane-spanning segment. The Cytoplasmic portion of the chain corresponds to 776 to 787 (RSRSWSFLERPG). The helical transmembrane segment at 788-808 (MLLVIAFMIAQLVATLIAVYA) threads the bilayer. The Extracellular segment spans residues 809 to 817 (NWAFARVKG). A helical membrane pass occupies residues 818-838 (CGWGWAGVIWLYSIIFYLPLD). Residues 839–952 (IMKFAIRYIL…IETIQQHYTV (114 aa)) are Cytoplasmic-facing.

This sequence belongs to the cation transport ATPase (P-type) (TC 3.A.3) family. Type IIIA subfamily. In terms of tissue distribution, expressed at high levels in root, stem, leaf and flower.

The protein localises to the cell membrane. The enzyme catalyses ATP + H2O + H(+)(in) = ADP + phosphate + 2 H(+)(out). The plasma membrane ATPase of plants and fungi is a hydrogen ion pump. The proton gradient it generates drives the active transport of nutrients by H(+)-symport. The resulting external acidification and/or internal alkinization may mediate growth responses. The sequence is that of Plasma membrane ATPase 4 (PMA4) from Nicotiana plumbaginifolia (Leadwort-leaved tobacco).